A 735-amino-acid polypeptide reads, in one-letter code: 2-5A-dependent ribonuclease (735 aa).

The disordered stretch occupies residues 1-21 (METPDYNTPQGGTPSAGSQRT). ANK repeat units lie at residues 24–53 (EDDS…DANA), 58–87 (WGWT…DPHR), 91–120 (NGAT…DVNE), 124–153 (NGFT…NVNL), 167–197 (GGAT…EVDA), 201–234 (MGRN…DVNV), 238–268 (RGKT…NIDA), 272–301 (EGKT…DKCD), and 303–328 (LVWI…NPDT). A binding to TMEV Leader protein region spans residues 26–51 (DSSLIKAVQKGDVVRVQQLLEKGADA). 2 2-5A binding (P-loop) regions span residues 229–242 (GADV…GKTP) and 253–275 (GLVQ…EGKT). The Protein kinase domain occupies 364-584 (IHDDYKIAGT…LVDLLGHPFF (221 aa)). The C6-type zinc-finger motif lies at 401 to 436 (CKEVSCLRDCGDHSNLVAFYGREDDKGCLYVCVSLC). The 136-residue stretch at 587-722 (WENRYRTLRN…KHFPQPPPRL (136 aa)) folds into the KEN domain. Residues 714–735 (HFPQPPPRLSVPEAVGPGGIQS) are disordered.

Belongs to the protein kinase superfamily. (Microbial infection) Interacts (via N-terminus) with TMEV leader protein; this interaction prevents RNASEL activation by its substrate 2'-5' oligoadenylates. As to quaternary structure, monomer (inactive form) or homodimer. Interacts with ABCE1; this interaction inhibits the RNASEL. It depends on Mn(2+) as a cofactor. The cofactor is Mg(2+). Expressed in spleen, thymus, lung, testis, kidney, liver and heart.

The protein resides in the cytoplasm. Its subcellular location is the mitochondrion. After binding to 2-5A (5'-phosphorylated 2',5'-linked oligoadenylates) the homodimerization and subsequent activation occurs. Inhibited by RNASEL inhibitor ABCE1/RLI, a cytoplasmic member of the ATP-binding cassette (ABC) transporter family. Functionally, endoribonuclease that functions in the interferon (IFN) antiviral response. In INF treated and virus infected cells, RNASEL probably mediates its antiviral effects through a combination of direct cleavage of single-stranded viral RNAs, inhibition of protein synthesis through the degradation of rRNA, induction of apoptosis, and induction of other antiviral genes. RNASEL mediated apoptosis is the result of a JNK-dependent stress-response pathway leading to cytochrome c release from mitochondria and caspase-dependent apoptosis. Therefore, activation of RNASEL could lead to elimination of virus infected cells under some circumstances. In the crosstalk between autophagy and apoptosis proposed to induce autophagy as an early stress response to small double-stranded RNA and at later stages of prolonged stress to activate caspase-dependent proteolytic cleavage of BECN1 to terminate autophagy and promote apoptosis. Might play a central role in the regulation of mRNA turnover. Cleaves 3' of UpNp dimers, with preference for UU and UA sequences, to sets of discrete products ranging from between 4 and 22 nucleotides in length. The sequence is that of 2-5A-dependent ribonuclease (Rnasel) from Mus musculus (Mouse).